Reading from the N-terminus, the 54-residue chain is Large ribosomal subunit protein uL15 (54 aa).

Over residues 1 to 30 (MPSRLRXTRKLRGHVSHGHGRIGKHRKHPG) the composition is skewed to basic residues. The tract at residues 1 to 42 (MPSRLRXTRKLRGHVSHGHGRIGKHRKHPGGRGNAGGMHHHR) is disordered. Residue histidine 39 is modified to (3S)-3-hydroxyhistidine. Lysine 47 carries the post-translational modification N6-acetyllysine.

Belongs to the universal ribosomal protein uL15 family. As to quaternary structure, component of the large ribosomal subunit. Hydroxylated on His-39 by MINA.

The protein resides in the cytoplasm. Its function is as follows. Component of the large ribosomal subunit. The ribosome is a large ribonucleoprotein complex responsible for the synthesis of proteins in the cell. The chain is Large ribosomal subunit protein uL15 (RPL27A) from Sus scrofa (Pig).